The sequence spans 153 residues: Transthyretin (153 aa).

The first 19 residues, 1-19, serve as a signal peptide directing secretion; that stretch reads MASFKSFLLLALLAIVSEA. A Sulfocysteine modification is found at C34. Positions 39 and 78 each coordinate L-thyroxine. N81 is a glycosylation site (N-linked (GlcNAc...) asparagine). S141 serves as a coordination point for L-thyroxine.

It belongs to the transthyretin family. In terms of assembly, homotetramer. Dimer of dimers. In the homotetramer, subunits assemble around a central channel that can accommodate two ligand molecules. Interacts with rbp4. Sulfonation of the reactive cysteine Cys-34 enhances the stability of the native conformation of TTR, avoiding misassembly of the protein leading to amyloid formation. As to expression, detected in plasma (at protein level). Expressed during metamorphosis in tadpole liver, but not in tadpole brain nor adult liver. Between 1.5 and 3 days of development, also expressed in the mesoderm of the kidney.

It localises to the secreted. Thyroid hormone-binding protein, with a much higher binding affinity for triiodothyronine (T3) than for thyroxine (T4). Probably transports triiodothyronine from the bloodstream to the brain. The chain is Transthyretin (ttr) from Xenopus laevis (African clawed frog).